We begin with the raw amino-acid sequence, 806 residues long: MDFINIEKKWQEFWWKNKSFEPKDDFNLPKKYILSMLPYPSGEIHMGHVRNYTIGDALARYYRLHHYNVLHPMGFDSFGMPAENAAIKHGIHPKTWTYENIENMQKEFEALGFSFSKNREFATSDPDYTKFEQRFFIDLWEKGLIYRKKAMLNWCPNDKTVLANEQVIDGRCWRCDTEVIQKELYQYYLKITNYAEELLKDLEALEDHWPSQVLIMQKNWIGKSSGLQFGFKIADECLKACNGIQEIEVFTTRADTIYGVTYIAIAPEHPLVEHAIKQVSQEVSKMIKAILNTTQRERALEKKGAFLGIYAIHPLTKQKIPVWVANFALANYGSGALMGVPACDERDFEFANLYHIPIKVITQSPQNLPHTKEEVLKNSGEWSDLSSSVAREQIIAYFEKENLGKRVINYRLQDWGVSRQRYWGAPIPMIHCNHCGIVPETQLPVTLPEDIVIDGEGNPLEKHASWKFTQCPKCHKNALRETDTMDTFIQSSWYFLRYTTPKNQRENQAFDQNYLKYFMPVDTYIGGIEHAILHLLYARFFTKALRDLGYLHLDEPFKQLITQGMVLKNGAKMSKSKGNVVSPKEILKKYGADAARLFILFAAPPAKELEWNDSALEGAHRFIKRLYDKANAINPTTSKPEFKEVSLNEAQKLGRKKVYEALKKSHEIFNKAESAYSFNTLIASCMEALNALSAQNNERILCEGYFVLLQILEPIIPHTAWELSERLFKRENFKPIAIDEDALMEDFMTLGLTINGKRRAELKVNINASKEEIIVLAKKELEKYLENASVKKEIYVPNKLVNFVIA.

The 'HIGH' region signature appears at 38–48 (PYPSGEIHMGH). The short motif at 572-576 (KMSKS) is the 'KMSKS' region element. Residue K575 participates in ATP binding.

It belongs to the class-I aminoacyl-tRNA synthetase family.

The protein localises to the cytoplasm. The catalysed reaction is tRNA(Leu) + L-leucine + ATP = L-leucyl-tRNA(Leu) + AMP + diphosphate. This chain is Leucine--tRNA ligase, found in Helicobacter pylori (strain ATCC 700392 / 26695) (Campylobacter pylori).